Consider the following 201-residue polypeptide: MYTLLSGLYKYMFQKDEYCVLILGLDNAGKTTFLEQSKTRFNKNYKGMSLSKITTTVGLNIGTVDVGKARLMFWDLGGQEELQSLWDKYYAECHGVIYVIDSTDEERLSESKQAFEKMVTSEALDGVPILVLANKQDVETCLSIPDIKTAFSDCASKIGRRDCLTQACSALTGKGVREGIEWMVKCVVRNVHRPPRQRDIT.

Methionine 1 is modified (N-acetylmethionine). GTP contacts are provided by residues glycine 24–threonine 31, aspartate 75–glutamine 79, and asparagine 134–aspartate 137.

This sequence belongs to the small GTPase superfamily. Arf family. In terms of assembly, interacts with SYS1.

It is found in the golgi apparatus. The protein localises to the trans-Golgi network. Functionally, trans-Golgi-associated GTPase that regulates protein sorting. Controls the targeting of ARL1 and its effector to the trans-Golgi. Required for the lipidation of chylomicrons in the intestine and required for VLDL lipidation in the liver. This Bos taurus (Bovine) protein is ADP-ribosylation factor-related protein 1 (ARFRP1).